A 258-amino-acid polypeptide reads, in one-letter code: uncharacterized protein (258 aa).

An HTH deoR-type domain is found at 3-58 (VAERQQKIVEIVNMRSSIRVSELSDIFSVTEETIRRDLEKLEKEHKLSRSHGGAVS). Residues 20–39 (IRVSELSDIFSVTEETIRRD) constitute a DNA-binding region (H-T-H motif).

This is an uncharacterized protein from Bacillus subtilis (strain 168).